The primary structure comprises 593 residues: Inactive metallocarboxypeptidase ECM14 (593 aa).

The first 22 residues, 1–22, serve as a signal peptide directing secretion; the sequence is MHFSVRLSLLLTLASSLPLVSA. A propeptide spanning residues 23 to 184 is cleaved from the precursor; the sequence is IPQHEDQAYT…QTIYESYPKT (162 aa). The tract at residues 180–210 is disordered; that stretch reads SYPKTNPSSPSQQGPTTRRFSPSASTSKTKP. Positions 182–210 are enriched in polar residues; that stretch reads PKTNPSSPSQQGPTTRRFSPSASTSKTKP. The region spanning 220-546 is the Peptidase M14 domain; that stretch reads DYQPLSVLLP…RAMVAMGKFL (327 aa). 2 residues coordinate Zn(2+): histidine 285 and glutamate 288. Substrate is bound by residues 285–288, arginine 343, and 360–361; these read HARE and DH. Cysteine 354 and cysteine 377 form a disulfide bridge. An N-linked (GlcNAc...) asparagine glycan is attached at asparagine 370. Histidine 417 contacts Zn(2+). A substrate-binding site is contributed by 418–419; it reads SY. The interval 557–593 is disordered; that stretch reads NGPHAAEETQNYDDDFEEDEAEEDSDVFRAQGDDMSS. The span at 566–581 shows a compositional bias: acidic residues; sequence QNYDDDFEEDEAEEDS.

It belongs to the peptidase M14 family. The cofactor is Zn(2+).

It localises to the vacuole. The protein resides in the secreted. Its function is as follows. Inactive carboxypeptidase that may play a role in cell wall organization and biogenesis. The chain is Inactive metallocarboxypeptidase ECM14 (ECM14) from Arthroderma gypseum (strain ATCC MYA-4604 / CBS 118893) (Microsporum gypseum).